Reading from the N-terminus, the 362-residue chain is Large ribosomal subunit protein uL4A (362 aa).

Ser2 bears the N-acetylserine mark. Residue Arg95 is modified to Omega-N-methylarginine. The interval 277 to 362 (PSHIISTSDV…AVFTETLKHD (86 aa)) is C-terminal-extended nuclear localization signal.

It belongs to the universal ribosomal protein uL4 family. As to quaternary structure, component of the large ribosomal subunit (LSU). Mature yeast ribosomes consist of a small (40S) and a large (60S) subunit. The 40S small subunit contains 1 molecule of ribosomal RNA (18S rRNA) and 33 different proteins (encoded by 57 genes). The large 60S subunit contains 3 rRNA molecules (25S, 5.8S and 5S rRNA) and 46 different proteins (encoded by 81 genes). uL4 is associated with the polypeptide exit tunnel. uL4 interacts with its chaperone ACL4 and the nuclear import receptor KAP104. Post-translationally, N-terminally acetylated by acetyltransferase NatA.

It localises to the cytoplasm. It is found in the nucleus. Component of the ribosome, a large ribonucleoprotein complex responsible for the synthesis of proteins in the cell. The small ribosomal subunit (SSU) binds messenger RNAs (mRNAs) and translates the encoded message by selecting cognate aminoacyl-transfer RNA (tRNA) molecules. The large subunit (LSU) contains the ribosomal catalytic site termed the peptidyl transferase center (PTC), which catalyzes the formation of peptide bonds, thereby polymerizing the amino acids delivered by tRNAs into a polypeptide chain. The nascent polypeptides leave the ribosome through a tunnel in the LSU and interact with protein factors that function in enzymatic processing, targeting, and the membrane insertion of nascent chains at the exit of the ribosomal tunnel. uL4 participates in the regulation of the accumulation of its own mRNA. The polypeptide is Large ribosomal subunit protein uL4A (Saccharomyces cerevisiae (strain ATCC 204508 / S288c) (Baker's yeast)).